The sequence spans 511 residues: Coatomer subunit delta (511 aa).

Residues Gln-167–Gly-177 show a composition bias toward basic and acidic residues. Residues Gln-167–Ser-188 are disordered. Residue Ser-223 is modified to Phosphoserine. Residues Lys-233 and Lys-241 each carry the N6-acetyllysine modification. Position 244 is a phosphoserine (Ser-244). Positions Met-271 to Leu-511 constitute an MHD domain. Lys-309 and Lys-351 each carry N6-acetyllysine. Ser-493 is modified (phosphoserine).

It belongs to the adaptor complexes medium subunit family. Delta-COP subfamily. Oligomeric complex that consists of at least the alpha, beta, beta', gamma, delta, epsilon and zeta subunits.

The protein localises to the cytoplasm. Its subcellular location is the golgi apparatus membrane. It is found in the cytoplasmic vesicle. The protein resides in the COPI-coated vesicle membrane. Functionally, the coatomer is a cytosolic protein complex that binds to dilysine motifs and reversibly associates with Golgi non-clathrin-coated vesicles, which further mediate biosynthetic protein transport from the ER, via the Golgi up to the trans Golgi network. Coatomer complex is required for budding from Golgi membranes, and is essential for the retrograde Golgi-to-ER transport of dilysine-tagged proteins. In mammals, the coatomer can only be recruited by membranes associated to ADP-ribosylation factors (ARFs), which are small GTP-binding proteins; the complex also influences the Golgi structural integrity, as well as the processing, activity, and endocytic recycling of LDL receptors. In Pongo abelii (Sumatran orangutan), this protein is Coatomer subunit delta (ARCN1).